The primary structure comprises 181 residues: Adenylate kinase (181 aa).

10–15 is an ATP binding site; sequence GAGKGT. An NMP region spans residues 30–59; sequence STGDLFRKNIGDGTPLGLEAKRYLDAGDLV. AMP is bound by residues Thr31, Arg36, 57-59, 85-88, and Gln92; these read DLV and GYPR. Positions 126-132 are LID; it reads GRGRADD. Arg127 is an ATP binding site. 2 residues coordinate AMP: Arg129 and Arg140. Position 166 (Gly166) interacts with ATP.

Belongs to the adenylate kinase family. As to quaternary structure, monomer.

Its subcellular location is the cytoplasm. The catalysed reaction is AMP + ATP = 2 ADP. Its pathway is purine metabolism; AMP biosynthesis via salvage pathway; AMP from ADP: step 1/1. Its function is as follows. Catalyzes the reversible transfer of the terminal phosphate group between ATP and AMP. Plays an important role in cellular energy homeostasis and in adenine nucleotide metabolism. In Mycolicibacterium smegmatis (strain ATCC 700084 / mc(2)155) (Mycobacterium smegmatis), this protein is Adenylate kinase.